We begin with the raw amino-acid sequence, 649 residues long: Phosphomethylpyrimidine synthase (649 aa).

Residues Asn-235, Met-264, Tyr-293, His-329, Ser-349–Gly-351, Asp-390–Arg-393, and Glu-429 each bind substrate. His-433 serves as a coordination point for Zn(2+). Position 456 (Tyr-456) interacts with substrate. Position 497 (His-497) interacts with Zn(2+). Cys-577, Cys-580, and Cys-585 together coordinate [4Fe-4S] cluster. Residues Gly-620–Glu-649 form a disordered region. Residues Met-621–Gly-632 show a composition bias toward basic and acidic residues.

Belongs to the ThiC family. In terms of assembly, homodimer. Requires [4Fe-4S] cluster as cofactor.

It catalyses the reaction 5-amino-1-(5-phospho-beta-D-ribosyl)imidazole + S-adenosyl-L-methionine = 4-amino-2-methyl-5-(phosphooxymethyl)pyrimidine + CO + 5'-deoxyadenosine + formate + L-methionine + 3 H(+). The protein operates within cofactor biosynthesis; thiamine diphosphate biosynthesis. Functionally, catalyzes the synthesis of the hydroxymethylpyrimidine phosphate (HMP-P) moiety of thiamine from aminoimidazole ribotide (AIR) in a radical S-adenosyl-L-methionine (SAM)-dependent reaction. In Vibrio atlanticus (strain LGP32) (Vibrio splendidus (strain Mel32)), this protein is Phosphomethylpyrimidine synthase.